We begin with the raw amino-acid sequence, 518 residues long: NADH-quinone oxidoreductase subunit N (518 aa).

14 helical membrane-spanning segments follow: residues 18–38, 45–65, 82–102, 113–133, 136–156, 171–191, 220–240, 254–274, 295–315, 328–348, 355–375, 399–419, 439–459, and 486–506; these read FRPEMALTFGTLVLFVLDLVF, VALLTAGALAVLAAAAGLLAI, AFAIFFKWLFLAAGALTVIIA, IGQFFALLMAIVLGMFMMASA, LLMVYLSLELVSMVSYVLAGF, VIYGGVASGVMLFGMSYLYGL, VALVVAIVFVTAGIGYKVAAV, PTPFTAFLSVGPKAAGFALAI, LAGIPWPAVVGVIAAVTMTLG, LLAYSSIAHAGYTLMGLSAVS, VMIYMLVYLVMNVGAFLVVIL, AVAFAIFLFSLTGLPPFAGFV, WYAWLALIGALNTAIALYYYV, and VMLGAFSVAILVFGIWWTPMV.

This sequence belongs to the complex I subunit 2 family. NDH-1 is composed of 14 different subunits. Subunits NuoA, H, J, K, L, M, N constitute the membrane sector of the complex.

The protein resides in the cell inner membrane. It catalyses the reaction a quinone + NADH + 5 H(+)(in) = a quinol + NAD(+) + 4 H(+)(out). Its function is as follows. NDH-1 shuttles electrons from NADH, via FMN and iron-sulfur (Fe-S) centers, to quinones in the respiratory chain. The immediate electron acceptor for the enzyme in this species is believed to be ubiquinone. Couples the redox reaction to proton translocation (for every two electrons transferred, four hydrogen ions are translocated across the cytoplasmic membrane), and thus conserves the redox energy in a proton gradient. In Anaeromyxobacter sp. (strain Fw109-5), this protein is NADH-quinone oxidoreductase subunit N.